A 354-amino-acid chain; its full sequence is 3-isopropylmalate dehydrogenase (354 aa).

An NAD(+)-binding site is contributed by 76–87 (GPRWDGAKERPE). Residues Arg94, Arg104, Arg130, and Asp215 each contribute to the substrate site. Residues Asp215, Asp239, and Asp243 each coordinate Mg(2+). Residue 273 to 285 (GSAPDIAGKNKAN) coordinates NAD(+).

The protein belongs to the isocitrate and isopropylmalate dehydrogenases family. LeuB type 1 subfamily. As to quaternary structure, homodimer. The cofactor is Mg(2+). Mn(2+) is required as a cofactor.

The protein resides in the cytoplasm. The catalysed reaction is (2R,3S)-3-isopropylmalate + NAD(+) = 4-methyl-2-oxopentanoate + CO2 + NADH. It participates in amino-acid biosynthesis; L-leucine biosynthesis; L-leucine from 3-methyl-2-oxobutanoate: step 3/4. Its function is as follows. Catalyzes the oxidation of 3-carboxy-2-hydroxy-4-methylpentanoate (3-isopropylmalate) to 3-carboxy-4-methyl-2-oxopentanoate. The product decarboxylates to 4-methyl-2 oxopentanoate. In Bacillus thuringiensis subsp. konkukian (strain 97-27), this protein is 3-isopropylmalate dehydrogenase.